A 144-amino-acid polypeptide reads, in one-letter code: Large ribosomal subunit protein uL16 (144 aa).

Over residues 1-19 the composition is skewed to basic residues; that stretch reads MLLPKRVKYRRQHRPKTTG. A disordered region spans residues 1 to 26; it reads MLLPKRVKYRRQHRPKTTGRSKGGNE.

The protein belongs to the universal ribosomal protein uL16 family. As to quaternary structure, part of the 50S ribosomal subunit.

Binds 23S rRNA and is also seen to make contacts with the A and possibly P site tRNAs. The chain is Large ribosomal subunit protein uL16 from Macrococcus caseolyticus (strain JCSC5402) (Macrococcoides caseolyticum).